The chain runs to 648 residues: MKQNPAKTARMWIIICLLFVLGQATDNDRDFKMCGKWLHGIAPQNLEYDLKTGCERIEISANESTLSIQGRITAKCTQSSSIQLDSNPHQNQSHFCVFWEPLLDLLIVEVNGKNHTLCKPNGLQGTCCTDLSQGVQDNAHMYGIVNGSVKGDIITGDLKGNYIFDGAHINCKEKFCDEARLKPRGANMIEEVVMRFNAKGRVDLPCAQGTVIEMDEEFTGHNFTVPAPRFVDANTIPSVYIPSSLRSVSRRKSKVVCTYYKNKTLFERGPSKSALLDDIVGLSVENETIRNLIEPVKIRFHHRPFAPDSSGRCVSWDTKQDNEVNWKDDGCDTVKINEEQTECHCNHLTYFAILVQVEQKSTVRHLKALTFITAVGCAVSLVSCLVLFYWLCKRRRGKKNQISLVHRGLVVAIFLLCLFFILTGILANVANETVCQLTGSLLHYGLLSTLCWMAMEVFHTFLLVRKVFNSPLPIWIFYLMGFGFPFLLVSILLSVGDIYGERKIKPSDDVNNPYRMCWMTEGDKSQLAHYIINIGLLAVVVSSGLVMLFLVVREIRNRPDWKKIHVAFLSIWGLTCLYGTTWALGFLDFGPFSEVTLFLFCIINSLQGFFLMLRYYALERMKKKDVSSSDGSSSGSSKQHMLQTNEKS.

An N-terminal signal peptide occupies residues 1–24 (MKQNPAKTARMWIIICLLFVLGQA). Residues 25–370 (TDNDRDFKMC…STVRHLKALT (346 aa)) lie on the Extracellular side of the membrane. A disulfide bridge links C34 with C96. 7 N-linked (GlcNAc...) asparagine glycosylation sites follow: N62, N91, N114, N146, N222, N262, and N286. An intrachain disulfide couples C127 to C176. A GAIN-B domain is found at 214-361 (MDEEFTGHNF…AILVQVEQKS (148 aa)). Cystine bridges form between C313–C343 and C331–C345. A GPS region spans residues 313 to 361 (CVSWDTKQDNEVNWKDDGCDTVKINEEQTECHCNHLTYFAILVQVEQKS). Residues 349–361 (TYFAILVQVEQKS) form a stachel region. Residues 371 to 391 (FITAVGCAVSLVSCLVLFYWL) traverse the membrane as a helical segment. Residues 392-408 (CKRRRGKKNQISLVHRG) lie on the Cytoplasmic side of the membrane. A helical membrane pass occupies residues 409-429 (LVVAIFLLCLFFILTGILANV). At 430–443 (ANETVCQLTGSLLH) the chain is on the extracellular side. N431 is a glycosylation site (N-linked (GlcNAc...) asparagine). Residues 444–464 (YGLLSTLCWMAMEVFHTFLLV) traverse the membrane as a helical segment. The Cytoplasmic segment spans residues 465-471 (RKVFNSP). Residues 472 to 492 (LPIWIFYLMGFGFPFLLVSIL) form a helical membrane-spanning segment. At 493–530 (LSVGDIYGERKIKPSDDVNNPYRMCWMTEGDKSQLAHY) the chain is on the extracellular side. Residues 531–551 (IINIGLLAVVVSSGLVMLFLV) form a helical membrane-spanning segment. At 552–563 (VREIRNRPDWKK) the chain is on the cytoplasmic side. Residues 564–586 (IHVAFLSIWGLTCLYGTTWALGF) traverse the membrane as a helical segment. Topologically, residues 587 to 595 (LDFGPFSEV) are extracellular. Residues 596 to 618 (TLFLFCIINSLQGFFLMLRYYAL) traverse the membrane as a helical segment. Residues 619 to 648 (ERMKKKDVSSSDGSSSGSSKQHMLQTNEKS) are Cytoplasmic-facing.

It belongs to the G-protein coupled receptor 2 family. LN-TM7 subfamily. Heterodimer of 2 chains generated by proteolytic processing; the large extracellular N-terminal fragment (ADGRG1 NT) and the membrane-bound C-terminal fragment (ADGRG1-CT) predominantly remain associated and non-covalently linked. Autoproteolytically cleaved into 2 fragments; the large extracellular N-terminal fragment (ADGRG1 NT) and the membrane-bound C-terminal fragment (ADGRG1 CT) predominantly remain associated and non-covalently linked.

The protein localises to the cell membrane. Forms a heterodimer of 2 chains generated by proteolytic processing that remain associated through non-covalent interactions mediated by the GAIN-B domain. In the inactivated receptor, the Stachel sequence (also named stalk) is embedded in the GAIN-B domain, where it adopts a beta-strand conformation. On activation, the Stachel moves into the 7 transmembrane region and adopts a twisted hook-shaped configuration that forms contacts within the receptor, leading to coupling of a G-alpha protein, which activates signaling. The cleaved GAIN-B and N-terminal domains can then dissociate from the rest of the receptor. Functionally, adhesion G-protein coupled receptor (aGPCR), which is involved in oligodendrocyte development and maintenance of peripheral myelin. Ligand binding causes a conformation change that triggers signaling via guanine nucleotide-binding proteins (G proteins) and modulates the activity of downstream effectors, such as RhoA pathway. Adgrg1 is coupled to G(12) and/or G(13) G proteins (gna12 and gna13, respectively) and mediates the activation Rho small GTPases. Adgrg1-dependent RhoA signaling promotes timely radial sorting of axons. Required to establish proper myelin thickness and facilitate organization of the myelin sheath in the mature peripheral nervous system. In Danio rerio (Zebrafish), this protein is Adhesion G-protein coupled receptor G1.